A 775-amino-acid chain; its full sequence is Glutamine--tRNA ligase (775 aa).

Alanine 2 carries the post-translational modification N-acetylalanine. A Phosphoserine modification is found at serine 70. ATP-binding positions include 271-273 (EPN) and 277-283 (HIGHAKA). Aspartate 303 contacts L-glutamine. Residue lysine 309 is modified to N6-acetyllysine. Residue tyrosine 438 participates in L-glutamine binding. Residues threonine 457, 486 to 487 (RL), and 494 to 496 (VSK) each bind ATP. A Phosphoserine modification is found at serine 495.

This sequence belongs to the class-I aminoacyl-tRNA synthetase family. As to quaternary structure, monomer. Part of a multisubunit complex that groups tRNA ligases for Arg (RARS1), Asp (DARS1), Gln (QARS1), Ile (IARS1), Leu (LARS1), Lys (KARS1), Met (MARS1) the bifunctional ligase for Glu and Pro (EPRS1) and the auxiliary subunits AIMP1/p43, AIMP2/p38 and EEF1E1/p18. Interacts with RARS1. Part of a complex composed of RARS1, QARS1 and AIMP1.

The protein resides in the cytoplasm. The protein localises to the cytosol. The catalysed reaction is tRNA(Gln) + L-glutamine + ATP = L-glutaminyl-tRNA(Gln) + AMP + diphosphate. Functionally, glutamine--tRNA ligase. Plays a critical role in brain development. This is Glutamine--tRNA ligase (Qars1) from Mus musculus (Mouse).